Here is a 766-residue protein sequence, read N- to C-terminus: 5-methyltetrahydropteroyltriglutamate--homocysteine methyltransferase (766 aa).

5-methyltetrahydropteroyltri-L-glutamate-binding positions include 16 to 19 and lysine 122; that span reads RELK. Residues 443 to 445 and glutamate 496 contribute to the L-homocysteine site; that span reads IGS. L-methionine-binding positions include 443 to 445 and glutamate 496; that span reads IGS. 5-methyltetrahydropteroyltri-L-glutamate contacts are provided by residues 527 to 528 and tryptophan 573; that span reads RC. Aspartate 611 is an L-homocysteine binding site. Aspartate 611 contributes to the L-methionine binding site. Residue glutamate 617 coordinates 5-methyltetrahydropteroyltri-L-glutamate. Positions 653, 655, and 677 each coordinate Zn(2+). Catalysis depends on histidine 706, which acts as the Proton donor. A Zn(2+)-binding site is contributed by cysteine 738.

Belongs to the vitamin-B12 independent methionine synthase family. Zn(2+) serves as cofactor.

The enzyme catalyses 5-methyltetrahydropteroyltri-L-glutamate + L-homocysteine = tetrahydropteroyltri-L-glutamate + L-methionine. Its pathway is amino-acid biosynthesis; L-methionine biosynthesis via de novo pathway; L-methionine from L-homocysteine (MetE route): step 1/1. Catalyzes the transfer of a methyl group from 5-methyltetrahydrofolate to homocysteine resulting in methionine formation. The polypeptide is 5-methyltetrahydropteroyltriglutamate--homocysteine methyltransferase (Pseudomonas putida (strain W619)).